Consider the following 224-residue polypeptide: DNA repair and recombination protein RadB (224 aa).

It belongs to the eukaryotic RecA-like protein family. RadB subfamily.

Functionally, involved in DNA repair and in homologous recombination. May regulate the cleavage reactions of the branch-structured DNA. Has a very weak ATPase activity that is not stimulated by DNA. Binds DNA but does not promote DNA strands exchange. The sequence is that of DNA repair and recombination protein RadB from Methanoculleus marisnigri (strain ATCC 35101 / DSM 1498 / JR1).